A 314-amino-acid polypeptide reads, in one-letter code: Methenyltetrahydromethanopterin cyclohydrolase (314 aa).

It belongs to the MCH family.

It localises to the cytoplasm. It catalyses the reaction 5,10-methenyl-5,6,7,8-tetrahydromethanopterin + H2O = N(5)-formyl-5,6,7,8-tetrahydromethanopterin + H(+). It functions in the pathway one-carbon metabolism; methanogenesis from CO(2); 5,10-methenyl-5,6,7,8-tetrahydromethanopterin from CO(2): step 3/3. In terms of biological role, catalyzes the reversible interconversion of 5-formyl-H(4)MPT to methenyl-H(4)MPT(+). The chain is Methenyltetrahydromethanopterin cyclohydrolase from Methanoregula boonei (strain DSM 21154 / JCM 14090 / 6A8).